The sequence spans 118 residues: Non-specific lipid-transfer protein D (118 aa).

The signal sequence occupies residues 1 to 25; sequence MAGLMKLACLIFACMIVAGPITSNA. Cystine bridges form between C29-C77, C39-C54, C55-C100, and C75-C114.

The protein belongs to the plant LTP family.

In terms of biological role, plant non-specific lipid-transfer proteins transfer phospholipids as well as galactolipids across membranes. May play a role in wax or cutin deposition in the cell walls of expanding epidermal cells and certain secretory tissues. The chain is Non-specific lipid-transfer protein D (WAX9D) from Brassica oleracea var. italica (Broccoli).